The primary structure comprises 179 residues: MNRLKEKYLKEVVPALMSKFNYKSVMQVPKIEKIVINMGVGDAVQNAKALDNAVEELALISGQKPVVTRAKKSIAGFRLREGMPIGAKVTLRGERMYEFFDKLVSVSLPRVRDFRGVSKKSFDGRGNYTLGVKEQLIFPEIDYDKVNKVRGMDIVIVTTAKTDEEARELLTLLGMPFQK.

The protein belongs to the universal ribosomal protein uL5 family. In terms of assembly, part of the 50S ribosomal subunit; part of the 5S rRNA/L5/L18/L25 subcomplex. Contacts the 5S rRNA and the P site tRNA. Forms a bridge to the 30S subunit in the 70S ribosome.

In terms of biological role, this is one of the proteins that bind and probably mediate the attachment of the 5S RNA into the large ribosomal subunit, where it forms part of the central protuberance. In the 70S ribosome it contacts protein S13 of the 30S subunit (bridge B1b), connecting the 2 subunits; this bridge is implicated in subunit movement. Contacts the P site tRNA; the 5S rRNA and some of its associated proteins might help stabilize positioning of ribosome-bound tRNAs. The polypeptide is Large ribosomal subunit protein uL5 (Anoxybacillus flavithermus (strain DSM 21510 / WK1)).